The sequence spans 178 residues: Protein GrpE (178 aa).

It belongs to the GrpE family. Homodimer.

The protein resides in the cytoplasm. Functionally, participates actively in the response to hyperosmotic and heat shock by preventing the aggregation of stress-denatured proteins, in association with DnaK and GrpE. It is the nucleotide exchange factor for DnaK and may function as a thermosensor. Unfolded proteins bind initially to DnaJ; upon interaction with the DnaJ-bound protein, DnaK hydrolyzes its bound ATP, resulting in the formation of a stable complex. GrpE releases ADP from DnaK; ATP binding to DnaK triggers the release of the substrate protein, thus completing the reaction cycle. Several rounds of ATP-dependent interactions between DnaJ, DnaK and GrpE are required for fully efficient folding. The sequence is that of Protein GrpE from Rickettsia prowazekii (strain Madrid E).